The chain runs to 425 residues: Glutamate-1-semialdehyde 2,1-aminomutase (425 aa).

An N6-(pyridoxal phosphate)lysine modification is found at lysine 265.

The protein belongs to the class-III pyridoxal-phosphate-dependent aminotransferase family. HemL subfamily. In terms of assembly, homodimer. Requires pyridoxal 5'-phosphate as cofactor.

Its subcellular location is the cytoplasm. It carries out the reaction (S)-4-amino-5-oxopentanoate = 5-aminolevulinate. It functions in the pathway porphyrin-containing compound metabolism; protoporphyrin-IX biosynthesis; 5-aminolevulinate from L-glutamyl-tRNA(Glu): step 2/2. This Nitrosospira multiformis (strain ATCC 25196 / NCIMB 11849 / C 71) protein is Glutamate-1-semialdehyde 2,1-aminomutase.